The primary structure comprises 298 residues: Protein ILRUN (298 aa).

Positions 199–277 (NTQPHRKVEG…SVNLSPSSHA (79 aa)) are disordered. S215 and S222 each carry phosphoserine. Low complexity predominate over residues 242–255 (TWAPAPDTWAPAPD). Over residues 262 to 277 (NRLSQNSVNLSPSSHA) the composition is skewed to polar residues. S272 is modified (phosphoserine).

Interacts with IRF3; the interaction inhibits IRF3 binding to its DNA consensus sequence. Expressed in lung (at protein level).

The protein resides in the cytoplasm. It is found in the nucleus. In terms of biological role, negative regulator of innate antiviral response. Blocks IRF3-dependent cytokine production such as IFNA, IFNB and TNF. Interacts with IRF3 and inhibits IRF3 recruitment to type I IFN promoter sequences while also reducing nuclear levels of the coactivators EP300 and CREBBP. This is Protein ILRUN from Homo sapiens (Human).